The primary structure comprises 240 residues: 6-phosphogluconolactonase (240 aa).

The protein belongs to the glucosamine/galactosamine-6-phosphate isomerase family. 6-phosphogluconolactonase subfamily.

The catalysed reaction is 6-phospho-D-glucono-1,5-lactone + H2O = 6-phospho-D-gluconate + H(+). It participates in carbohydrate degradation; pentose phosphate pathway; D-ribulose 5-phosphate from D-glucose 6-phosphate (oxidative stage): step 2/3. Its function is as follows. Hydrolysis of 6-phosphogluconolactone to 6-phosphogluconate. This Synechocystis sp. (strain ATCC 27184 / PCC 6803 / Kazusa) protein is 6-phosphogluconolactonase (pgl).